A 282-amino-acid chain; its full sequence is Bis(5'-nucleosyl)-tetraphosphatase, symmetrical (282 aa).

It belongs to the Ap4A hydrolase family.

The catalysed reaction is P(1),P(4)-bis(5'-adenosyl) tetraphosphate + H2O = 2 ADP + 2 H(+). Its function is as follows. Hydrolyzes diadenosine 5',5'''-P1,P4-tetraphosphate to yield ADP. In Escherichia coli O81 (strain ED1a), this protein is Bis(5'-nucleosyl)-tetraphosphatase, symmetrical.